Here is a 311-residue protein sequence, read N- to C-terminus: Porphobilinogen deaminase (311 aa).

Cys242 is subject to S-(dipyrrolylmethanemethyl)cysteine.

Belongs to the HMBS family. In terms of assembly, monomer. Dipyrromethane serves as cofactor.

It carries out the reaction 4 porphobilinogen + H2O = hydroxymethylbilane + 4 NH4(+). It participates in porphyrin-containing compound metabolism; protoporphyrin-IX biosynthesis; coproporphyrinogen-III from 5-aminolevulinate: step 2/4. Functionally, tetrapolymerization of the monopyrrole PBG into the hydroxymethylbilane pre-uroporphyrinogen in several discrete steps. This Neisseria meningitidis serogroup A / serotype 4A (strain DSM 15465 / Z2491) protein is Porphobilinogen deaminase (hemC).